A 3616-amino-acid chain; its full sequence is Replicase polyprotein 1ab (3616 aa).

The segment at 8–28 (CLCTPNARVFWEHGQVYCTRC) adopts a C4-type; atypical zinc-finger fold. The region spanning 69–181 (ECRPGGLCWL…KGLCPFSDAR (113 aa)) is the Peptidase C31 domain. Catalysis depends on for Nsp1-alpha papain-like cysteine proteinase activity residues Cys76 and His147. The Peptidase C32 domain occupies 262–381 (NDTKFSKCWE…FRFQTRKYYG (120 aa)). Catalysis depends on for Nsp1-beta papain-like cysteine proteinase activity residues Cys269 and His340. The Peptidase C33 domain occupies 381–486 (GYSPPGDGAC…RGVCGGECKF (106 aa)). Active-site for Nsp2 cysteine proteinase activity residues include Cys390 and His456. 2 disordered regions span residues 672-706 (SRAL…REVP) and 883-912 (PLKS…GAPR). A compositionally biased stretch (basic residues) spans 676-690 (KSAKPKRKRNKKKKT). The span at 903–912 (DQLSQDGAPR) shows a compositional bias: polar residues. 9 helical membrane passes run 942-962 (WLNH…SVVL), 977-997 (LFCL…FIPL), 1010-1030 (LSVF…VLPE), 1060-1080 (HIGV…VGGP), 1085-1105 (FYFL…AVAL), 1289-1309 (VADF…SAWL), 1364-1384 (ALMI…SLLV), 1386-1406 (VICV…VIAF), and 1425-1445 (VQFF…VILI). Residues 981-1105 (CCVLLCFHFP…LGLVFLAVAL (125 aa)) are HD1. Positions 1289 to 1448 (VADFVCLGLY…AVAVILISSW (160 aa)) are HD2. The Peptidase S32 domain maps to 1513–1714 (GSLRTRGCAK…AVVESLPTPE (202 aa)). Active-site charge relay system; for 3C-like serine proteinase activity residues include His1551, Asp1576, and Ser1628. Helical transmembrane passes span 1715-1735 (GALS…LIHV), 1737-1757 (FVPV…VVLA), 1761-1781 (FSFA…VLLL), and 1832-1852 (SKEI…LSLF). The interval 1737–1852 (FVPVIAVAFF…HVLALLLSLF (116 aa)) is HD3. Residues 2194-2352 (SLNGLQQSSA…LPYKLHPVRG (159 aa)) form the NiRAN domain. The region spanning 2590–2724 (GRCLEADLAS…YNESDELPNY (135 aa)) is the RdRp catalytic domain. The AV ZBD domain maps to 2844-2907 (KKKCRTCAHC…SSAMNLNTEL (64 aa)). Zn(2+) is bound by residues Cys2850, Cys2853, Cys2863, Cys2868, His2871, His2873, His2875, His2877, Cys2884, His2886, Cys2893, and Cys2896. The (+)RNA virus helicase ATP-binding domain maps to 2964–3116 (QVMKVAQTCA…AFSLMPGRQL (153 aa)). 2992 to 2999 (GAPGTGKT) contributes to the ATP binding site. Positions 3117–3248 (IEVFRFGPAV…CGDQPKMIVG (132 aa)) constitute a (+)RNA virus helicase C-terminal domain. Positions 3272–3368 (EGTASPLPQV…LTKYLKGESV (97 aa)) constitute an AV-Nsp11N/CoV-Nsp15M domain. Positions 3370–3492 (LPDSIMSTGR…MVWKDATAYF (123 aa)) constitute a NendoU domain.

It belongs to the arteriviridae polyprotein family. In terms of processing, specific enzymatic cleavages in vivo by its own proteases yield mature proteins. There are two alternative pathways for processing. Either nsp4-5 is cleaved, which represents the major pathway or the nsp5-6 and nsp6-7 are processed, which represents the minor pathway. The major pathway occurs when nsp2 acts as a cofactor for nsp4.

The protein localises to the host membrane. It is found in the host cytoplasm. The protein resides in the host perinuclear region. It catalyses the reaction RNA(n) + a ribonucleoside 5'-triphosphate = RNA(n+1) + diphosphate. The enzyme catalyses ATP + H2O = ADP + phosphate + H(+). The catalysed reaction is uridylyl-uridylyl-ribonucleotide-RNA = a 3'-end uridylyl-2',3'-cyclophospho-uridine-RNA + a 5'-end dephospho-ribonucleoside-RNA. In terms of biological role, the replicase polyprotein 1ab is a multifunctional protein: it contains the activities necessary for the transcription of negative stranded RNA, leader RNA, subgenomic mRNAs and progeny virion RNA as well as proteinases responsible for the cleavage of the polyprotein into functional products. The Nsp1 chain is essential for viral subgenomic mRNA synthesis. Its function is as follows. The 3C-like serine proteinase chain is responsible for the majority of cleavages as it cleaves the C-terminus of the polyprotein. Functionally, the helicase chain, which contains a zinc finger structure, displays RNA and DNA duplex-unwinding activities with 5' to 3' polarity. In terms of biological role, plays a role in viral transcription/replication and prevents the simultaneous activation of host cell dsRNA sensors, such as MDA5/IFIH1, OAS, and PKR. Acts by degrading the 5'-polyuridines generated during replication of the poly(A) region of viral genomic and subgenomic RNAs. Catalyzes a two-step reaction in which a 2'3'-cyclic phosphate (2'3'-cP) is first generated by 2'-O transesterification, which is then hydrolyzed to a 3'-phosphate (3'-P). If not degraded, poly(U) RNA would hybridize with poly(A) RNA tails and activate host dsRNA sensors. The chain is Replicase polyprotein 1ab (rep) from Mus musculus domesticus (western European house mouse).